The following is a 687-amino-acid chain: Methionine--tRNA ligase (687 aa).

The 'HIGH' region signature appears at 14-24 (PYANGYIHLGH). Zn(2+)-binding residues include C145, C148, C158, and C161. A 'KMSKS' region motif is present at residues 329 to 333 (KMSKS). Residue K332 coordinates ATP. One can recognise a tRNA-binding domain in the interval 585–687 (DFDKVDLRIG…DGAQVGQRVK (103 aa)).

Belongs to the class-I aminoacyl-tRNA synthetase family. MetG type 1 subfamily. Homodimer. Zn(2+) is required as a cofactor.

Its subcellular location is the cytoplasm. It catalyses the reaction tRNA(Met) + L-methionine + ATP = L-methionyl-tRNA(Met) + AMP + diphosphate. Functionally, is required not only for elongation of protein synthesis but also for the initiation of all mRNA translation through initiator tRNA(fMet) aminoacylation. The chain is Methionine--tRNA ligase from Bdellovibrio bacteriovorus (strain ATCC 15356 / DSM 50701 / NCIMB 9529 / HD100).